The sequence spans 302 residues: Cyclopropane mycolic acid synthase 2 (302 aa).

S-adenosyl-L-methionine contacts are provided by residues 41 to 42 (YS), 76 to 84 (LLDIGCGWG), 102 to 107 (TLSENQ), and 131 to 132 (WE). Residue cysteine 284 is part of the active site.

The protein belongs to the CFA/CMAS family. As to quaternary structure, homodimer.

The protein localises to the cytoplasm. The enzyme catalyses a 1-acyl-2-(9Z)-enoyl-sn-glycero-3-phospholipid + S-adenosyl-L-methionine = a 1-acyl-2-(9-cyclopronane)-acyl-sn-glycero-3-phospholipid + S-adenosyl-L-homocysteine + H(+). It functions in the pathway lipid metabolism; mycolic acid biosynthesis. Its function is as follows. Catalyzes the formation of trans cyclopropanated ketomycolate or methoxymycolate through the conversion of a double bond to a cyclopropane ring at the proximal position of an oxygenated mycolic acid via the transfer of a methylene group from S-adenosyl-L-methionine. In the absence of MmaA2, CmaA2 has a non-specific cis-cyclopropanating activity and is able to catalyze the conversion of a double bond to a cis cyclopropane ring at the distal position of an alpha mycolic acid. Cyclopropanated mycolic acids are key factors participating in cell envelope permeability, host immunomodulation and persistence. The sequence is that of Cyclopropane mycolic acid synthase 2 (cmaA2) from Mycobacterium bovis (strain ATCC BAA-935 / AF2122/97).